The sequence spans 280 residues: MAPSGSLAVPLAVLVLLLWGAPWTHGRRSNVRVITDENWRELLEGDWMIEFYAPWCPACQNLQPEWESFAEWGEDLEVNIAKVDVTEQPGLSGRFIITALPTIYHCKDGEFRRYQGPRTKKDFINFISDKEWKSIEPVSSWFGPGSVLMSSMSALFQLSMWIRTCHNYFIEDLGLPVWGSYTVFALATLFSGLLLGLCMIFVADCLCPSKRRRPQPYPYPSKKLLSESAQPLKKVEEEQEADEEDVSEEEAESKEGTNKDFPQNAIRQRSLGPSLATDKS.

Residues Met-1–Gly-26 form the signal peptide. The region spanning Arg-27–Trp-132 is the Thioredoxin domain. The Extracellular segment spans residues Arg-27–Ser-180. Active-site nucleophile residues include Cys-56 and Cys-59. A disulfide bridge connects residues Cys-56 and Cys-59. Residues Tyr-181 to Ala-203 form a helical membrane-spanning segment. The Cytoplasmic segment spans residues Asp-204–Ser-280. 2 S-palmitoyl cysteine lipidation sites follow: Cys-205 and Cys-207. Positions Pro-218–Ser-280 are disordered. 5 positions are modified to phosphoserine: Ser-228, Ser-247, Ser-270, Ser-274, and Ser-280. Residues Glu-237–Glu-252 show a composition bias toward acidic residues.

Interacts with ATP2A2. Palmitoylated; palmitoylation is required for localization to mitochondria-associated endoplasmic reticulum membrane (MAM). Ubiquitous. Highly expressed in kidney, liver, placenta and lung.

It localises to the endoplasmic reticulum membrane. The protein localises to the mitochondrion membrane. The protein resides in the secreted. It catalyses the reaction Catalyzes the rearrangement of -S-S- bonds in proteins.. Its function is as follows. Thiredoxin domain-containing protein that participates in various redox reactions through the reversible oxidation of its active center dithiol to a disulfide and catalyze dithiol-disulfide exchange reactions. Acts as a key inhibitor of the alternative triglyceride biosynthesis pathway by inhibiting the activity of TMEM68/DIESL at the endoplasmic reticulum, thereby restricting accumulation of triacylglycerol. The alternative triglyceride biosynthesis pathway mediates formation of triacylglycerol from diacylglycerol and membrane phospholipids. Acts as a protein disulfide isomerase by catalyzing formation or reduction of disulfide bonds. Specifically mediates formation of disulfide bonds of transmembrane proteins at the endoplasmic reticulum membrane. Involved in endoplasmic reticulum-associated degradation (ERAD) via its protein disulfide isomerase activity by acting on folding-defective polypeptides at the endoplasmic reticulum membrane. Acts as a negative regulator of platelet aggregation following secretion in the extracellular space. Acts as a regulator of endoplasmic reticulum-mitochondria contact sites via its ability to regulate redox signals. Regulates endoplasmic reticulum-mitochondria Ca(2+) flux. The sequence is that of Thioredoxin-related transmembrane protein 1 from Homo sapiens (Human).